Here is a 197-residue protein sequence, read N- to C-terminus: Peptide deformylase (197 aa).

Residues Cys-106 and His-148 each contribute to the Fe cation site. The active site involves Glu-149. His-152 contributes to the Fe cation binding site.

Belongs to the polypeptide deformylase family. Fe(2+) is required as a cofactor.

It catalyses the reaction N-terminal N-formyl-L-methionyl-[peptide] + H2O = N-terminal L-methionyl-[peptide] + formate. In terms of biological role, removes the formyl group from the N-terminal Met of newly synthesized proteins. Requires at least a dipeptide for an efficient rate of reaction. N-terminal L-methionine is a prerequisite for activity but the enzyme has broad specificity at other positions. This chain is Peptide deformylase, found in Mycobacterium bovis (strain ATCC BAA-935 / AF2122/97).